The following is a 337-amino-acid chain: MRPTLLWSLLLLLGVFAAAAAAPPDPLSQLPAPQHPKIRLYNAEQVLSWEPVALSNSTRPVVYQVQFKYTDSKWFTADIMSIGVNCTQITATECDFTAASPSAGFPMDFNVTLRLRAELGALHSAWVTMPWFQHYRNVTVGPPENIEVTPGEGSLIIRFSSPFDIADTSTAFFCYYVHYWEKGGIQQVKGPFRSNSISLDNLKPSRVYCLQVQAQLLWNKSNIFRVGHLSNISCYETMADASTELQQVILISVGTFSLLSVLAGACFFLVLKYRGLIKYWFHTPPSIPLQIEEYLKDPTQPILEALDKDSSPKDDVWDSVSIISFPEKEQEDVLQTL.

The signal sequence occupies residues 1–21 (MRPTLLWSLLLLLGVFAAAAA). Residues 28 to 247 (SQLPAPQHPK…MADASTELQQ (220 aa)) are Extracellular-facing. Residues 31–129 (PAPQHPKIRL…GALHSAWVTM (99 aa)) form the Fibronectin type-III 1 domain. N-linked (GlcNAc...) asparagine glycosylation is found at N56 and N85. The cysteines at positions 86 and 94 are disulfide-linked. N-linked (GlcNAc...) asparagine glycans are attached at residues N110, N137, N219, and N231. The region spanning 142 to 240 (PPENIEVTPG…NISCYETMAD (99 aa)) is the Fibronectin type-III 2 domain. An intrachain disulfide couples C209 to C234. A helical membrane pass occupies residues 248 to 268 (VILISVGTFSLLSVLAGACFF). At 269-337 (LVLKYRGLIK…KEQEDVLQTL (69 aa)) the chain is on the cytoplasmic side. Residues 276–277 (LI) carry the Dileucine internalization motif motif.

This sequence belongs to the type II cytokine receptor family. In terms of assembly, heterodimer with IFNGR1, to form the IFNG receptor complex. Interacts (via intracellular domain) with JAK2. In terms of tissue distribution, expressed in T-cells (at protein level).

It is found in the cell membrane. Its subcellular location is the cytoplasmic vesicle membrane. It localises to the golgi apparatus membrane. The protein localises to the endoplasmic reticulum membrane. The protein resides in the cytoplasm. Its function is as follows. Associates with IFNGR1 to form a receptor for the cytokine interferon gamma (IFNG). Ligand binding stimulates activation of the JAK/STAT signaling pathway. Required for signal transduction in contrast to other receptor subunit responsible for ligand binding. In Homo sapiens (Human), this protein is Interferon gamma receptor 2.